A 305-amino-acid chain; its full sequence is GTP cyclohydrolase FolE2 (305 aa).

The protein belongs to the GTP cyclohydrolase IV family.

It carries out the reaction GTP + H2O = 7,8-dihydroneopterin 3'-triphosphate + formate + H(+). It functions in the pathway cofactor biosynthesis; 7,8-dihydroneopterin triphosphate biosynthesis; 7,8-dihydroneopterin triphosphate from GTP: step 1/1. In terms of biological role, converts GTP to 7,8-dihydroneopterin triphosphate. The sequence is that of GTP cyclohydrolase FolE2 from Xanthomonas euvesicatoria pv. vesicatoria (strain 85-10) (Xanthomonas campestris pv. vesicatoria).